The following is a 79-amino-acid chain: Cytochrome c oxidase subunit 7A1, mitochondrial (79 aa).

A mitochondrion-targeting transit peptide spans 1–21 (MQALRVSRALIRSFNTTARNR). The Mitochondrial matrix portion of the chain corresponds to 22–46 (FQNRVPEKQKLFQEDNDIPLYLKGG). Residues 47–75 (IVDNILYRVTMGLCLGGSAYSMYCLGWAS) form a helical membrane-spanning segment. Over 76–79 (FPRN) the chain is Mitochondrial intermembrane.

The protein belongs to the cytochrome c oxidase VIIa family. As to quaternary structure, component of the complex IV (CIV, cytochrome c oxidase), a multisubunit enzyme composed of 14 subunits. The complex is composed of a catalytic core of 3 subunits MT-CO1, MT-CO2 and MT-CO3, encoded in the mitochondrial DNA, and 11 supernumerary subunits COX4I1 (or COX4I2), COX5A, COX5B, COX6A2 (or COX6A1), COX6B1 (or COX6B2), COX6C, COX7A1 (or COX7A2), COX7B, COX7C, COX8B and NDUFA4, which are encoded in the nuclear genome. The complex exists as a monomer or a dimer and forms supercomplexes (SCs) in the inner mitochondrial membrane with NADH-ubiquinone oxidoreductase (complex I, CI) and ubiquinol-cytochrome c oxidoreductase (cytochrome b-c1 complex, complex III, CIII), resulting in different assemblies (supercomplex SCI(1)III(2)IV(1) and megacomplex MCI(2)III(2)IV(2)).

Its subcellular location is the mitochondrion inner membrane. It participates in energy metabolism; oxidative phosphorylation. Its function is as follows. Component of the mitochondrial respiratory complex IV (CIV, also named cytochrome c oxidase complex), the last enzyme in the mitochondrial electron transport chain which drives oxidative phosphorylation. The CIV complex is the component of the respiratory chain that catalyzes the reduction of oxygen to water. Acts as an assembly factor that specifically drives the homodimerization of CIV complexes, mediating the formation of mitochondrial respiratory supercomplexes (respirasomes) containing two CIV: supercomplxes with two molecules of CIV show improved activity. Despite being highly expressed in brown adipose tissue, not required for thermogenesis. The sequence is that of Cytochrome c oxidase subunit 7A1, mitochondrial (COX7A1) from Trachypithecus cristatus (Silvered leaf-monkey).